The following is a 141-amino-acid chain: Large ribosomal subunit protein uL11 (141 aa).

Belongs to the universal ribosomal protein uL11 family. Part of the ribosomal stalk of the 50S ribosomal subunit. Interacts with L10 and the large rRNA to form the base of the stalk. L10 forms an elongated spine to which L12 dimers bind in a sequential fashion forming a multimeric L10(L12)X complex. In terms of processing, one or more lysine residues are methylated.

Functionally, forms part of the ribosomal stalk which helps the ribosome interact with GTP-bound translation factors. The sequence is that of Large ribosomal subunit protein uL11 from Geobacillus kaustophilus (strain HTA426).